Reading from the N-terminus, the 96-residue chain is Co-chaperonin GroES (96 aa).

Belongs to the GroES chaperonin family. As to quaternary structure, heptamer of 7 subunits arranged in a ring. Interacts with the chaperonin GroEL.

The protein localises to the cytoplasm. Its function is as follows. Together with the chaperonin GroEL, plays an essential role in assisting protein folding. The GroEL-GroES system forms a nano-cage that allows encapsulation of the non-native substrate proteins and provides a physical environment optimized to promote and accelerate protein folding. GroES binds to the apical surface of the GroEL ring, thereby capping the opening of the GroEL channel. In Hydrogenobaculum sp. (strain Y04AAS1), this protein is Co-chaperonin GroES.